The following is a 915-amino-acid chain: Probable dipeptidyl-aminopeptidase B (915 aa).

Disordered stretches follow at residues methionine 1–serine 20 and glutamine 52–glutamate 74. At methionine 1–lysine 95 the chain is on the cytoplasmic side. Basic and acidic residues predominate over residues arginine 55–glutamate 72. Residues isoleucine 96–phenylalanine 116 traverse the membrane as a helical; Signal-anchor for type II membrane protein segment. Topologically, residues leucine 117–valine 915 are vacuolar. N-linked (GlcNAc...) asparagine glycans are attached at residues asparagine 133, asparagine 179, asparagine 349, and asparagine 572. The active-site Charge relay system is serine 754. A glycan (N-linked (GlcNAc...) asparagine) is linked at asparagine 813. Active-site charge relay system residues include aspartate 831 and histidine 864. Asparagine 900 carries an N-linked (GlcNAc...) asparagine glycan.

It belongs to the peptidase S9B family.

Its subcellular location is the vacuole membrane. It carries out the reaction Release of an N-terminal dipeptide, Xaa-Yaa-|-Zaa-, from a polypeptide, preferentially when Yaa is Pro, provided Zaa is neither Pro nor hydroxyproline.. Its function is as follows. Type IV dipeptidyl-peptidase which removes N-terminal dipeptides sequentially from polypeptides having unsubstituted N-termini provided that the penultimate residue is proline. This Blastomyces gilchristii (strain SLH14081) (Blastomyces dermatitidis) protein is Probable dipeptidyl-aminopeptidase B (DAPB).